We begin with the raw amino-acid sequence, 1642 residues long: Cholesterol transporter ABCA5 (1642 aa).

A helical membrane pass occupies residues 32 to 52; the sequence is SVQEILFPLFFLFWLILISMM. Residues N86 and N190 are each glycosylated (N-linked (GlcNAc...) asparagine). 6 consecutive transmembrane segments (helical) span residues 220–240, 264–284, 297–317, 327–347, 355–375, and 396–416; these read VILI…AIHI, LSWV…MAVI, IVIF…ALML, VGVV…LIVL, LVWL…AQVM, and LIIT…LAVY. N-linked (GlcNAc...) asparagine glycosylation occurs at N458. Positions 478–713 constitute an ABC transporter 1 domain; the sequence is IRISGIQKAY…WGIGYRLSMY (236 aa). 514–521 is a binding site for ATP; the sequence is GHSGTGKS. A helical membrane pass occupies residues 866 to 886; sequence LLLLLIFFAVQIFMFLVHHSF. N919 carries an N-linked (GlcNAc...) asparagine glycan. The chain crosses the membrane as a helical span at residues 967–987; it reads VFTAVFNSTMVYSLPVMMNII. N996 is a glycosylation site (N-linked (GlcNAc...) asparagine). A run of 6 helical transmembrane segments spans residues 1021-1041, 1071-1091, 1102-1122, 1139-1159, 1164-1184, and 1207-1227; these read LYFQ…YFAM, VVDI…LFAF, FLAV…FTYI, FIYS…FFLG, AVFH…GCLI, and LLVA…LLQH. In terms of domain architecture, ABC transporter 2 spans 1290–1533; the sequence is IMVYNLHKEY…FGKGYFLEIK (244 aa). Residue 1333–1340 coordinates ATP; sequence GPNGAGKS.

It belongs to the ABC transporter superfamily. ABCA family. In terms of processing, N-glycosylated. In terms of tissue distribution, expressed in testis, epididymis, lung and brain.

The protein resides in the lysosome membrane. The protein localises to the late endosome membrane. It localises to the golgi apparatus membrane. Its subcellular location is the cell membrane. It carries out the reaction cholesterol(in) + ATP + H2O = cholesterol(out) + ADP + phosphate + H(+). In terms of biological role, cholesterol efflux transporter in macrophages that is responsible for APOAI/high-density lipoproteins (HDL) formation at the plasma membrane under high cholesterol levels and participates in reverse cholesterol transport. May play a role in the processing of autolysosomes. This is Cholesterol transporter ABCA5 from Rattus norvegicus (Rat).